Reading from the N-terminus, the 193-residue chain is Putative manganese efflux pump MntP (193 aa).

The next 6 membrane-spanning stretches (helical) occupy residues 3-23, 41-61, 69-89, 107-127, 130-150, and 164-184; these read IFAVFLLAIALSMDAFAVAVV, AAFGFFQFAMPVIGWWLGVSV, DHWIAFVLLGWIGGKMALSGL, AGRNLVVLGVATSIDALAVGL, AILGTPIWADAAIIGIVCAVI, and LCALNGWAELAGGLTLLAIAC.

This sequence belongs to the MntP (TC 9.B.29) family.

It localises to the cell inner membrane. In terms of biological role, probably functions as a manganese efflux pump. The protein is Putative manganese efflux pump MntP of Desulfovibrio desulfuricans (strain ATCC 27774 / DSM 6949 / MB).